The following is a 358-amino-acid chain: Protein-glutamate methylesterase/protein-glutamine glutaminase (358 aa).

One can recognise a Response regulatory domain in the interval 5 to 122 (SVLIIDDSAL…RNSLEAYTDE (118 aa)). A 4-aspartylphosphate modification is found at D56. The region spanning 159–351 (GISTEKLIII…RRILARLVGA (193 aa)) is the CheB-type methylesterase domain. Active-site residues include S171, H197, and D293.

It belongs to the CheB family. Post-translationally, phosphorylated by CheA. Phosphorylation of the N-terminal regulatory domain activates the methylesterase activity.

The protein resides in the cytoplasm. It carries out the reaction [protein]-L-glutamate 5-O-methyl ester + H2O = L-glutamyl-[protein] + methanol + H(+). It catalyses the reaction L-glutaminyl-[protein] + H2O = L-glutamyl-[protein] + NH4(+). Functionally, involved in chemotaxis. Part of a chemotaxis signal transduction system that modulates chemotaxis in response to various stimuli. Catalyzes the demethylation of specific methylglutamate residues introduced into the chemoreceptors (methyl-accepting chemotaxis proteins or MCP) by CheR. Also mediates the irreversible deamidation of specific glutamine residues to glutamic acid. The protein is Protein-glutamate methylesterase/protein-glutamine glutaminase of Nitrosomonas europaea (strain ATCC 19718 / CIP 103999 / KCTC 2705 / NBRC 14298).